A 382-amino-acid polypeptide reads, in one-letter code: Pyrimidine monooxygenase RutA (382 aa).

FMN-binding positions include 68–69 (IK), asparagine 134, glutamate 143, 159–160 (RY), and serine 209.

It belongs to the NtaA/SnaA/DszA monooxygenase family. RutA subfamily.

It catalyses the reaction uracil + FMNH2 + NADH + O2 = (Z)-3-ureidoacrylate + FMN + NAD(+) + H2O + H(+). The catalysed reaction is thymine + FMNH2 + NADH + O2 = (Z)-2-methylureidoacrylate + FMN + NAD(+) + H2O + H(+). Its function is as follows. Catalyzes the pyrimidine ring opening between N-3 and C-4 by an unusual flavin hydroperoxide-catalyzed mechanism, adding oxygen atoms in the process to yield ureidoacrylate peracid, that immediately reacts with FMN forming ureidoacrylate and FMN-N(5)-oxide. The FMN-N(5)-oxide reacts spontaneously with NADH to produce FMN. Requires the flavin reductase RutF to regenerate FMN in vivo. This is Pyrimidine monooxygenase RutA from Escherichia coli (strain SE11).